A 183-amino-acid polypeptide reads, in one-letter code: Protein GrpE (183 aa).

The segment covering Met1–Lys14 has biased composition (basic and acidic residues). The disordered stretch occupies residues Met1–Glu20.

The protein belongs to the GrpE family. In terms of assembly, homodimer.

It localises to the cytoplasm. Functionally, participates actively in the response to hyperosmotic and heat shock by preventing the aggregation of stress-denatured proteins, in association with DnaK and GrpE. It is the nucleotide exchange factor for DnaK and may function as a thermosensor. Unfolded proteins bind initially to DnaJ; upon interaction with the DnaJ-bound protein, DnaK hydrolyzes its bound ATP, resulting in the formation of a stable complex. GrpE releases ADP from DnaK; ATP binding to DnaK triggers the release of the substrate protein, thus completing the reaction cycle. Several rounds of ATP-dependent interactions between DnaJ, DnaK and GrpE are required for fully efficient folding. This Vibrio vulnificus (strain CMCP6) protein is Protein GrpE.